The chain runs to 227 residues: UPF0173 metal-dependent hydrolase DR_0006 (227 aa).

The protein belongs to the UPF0173 family.

This chain is UPF0173 metal-dependent hydrolase DR_0006, found in Deinococcus radiodurans (strain ATCC 13939 / DSM 20539 / JCM 16871 / CCUG 27074 / LMG 4051 / NBRC 15346 / NCIMB 9279 / VKM B-1422 / R1).